Here is a 257-residue protein sequence, read N- to C-terminus: Na(+)-translocating NADH-quinone reductase subunit C (257 aa).

A helical membrane pass occupies residues 12–32 (LFVVIALSLVCSIIVSAAAVG). Thr-225 is subject to FMN phosphoryl threonine.

Belongs to the NqrC family. Composed of six subunits; NqrA, NqrB, NqrC, NqrD, NqrE and NqrF. FMN is required as a cofactor.

The protein localises to the cell inner membrane. It carries out the reaction a ubiquinone + n Na(+)(in) + NADH + H(+) = a ubiquinol + n Na(+)(out) + NAD(+). In terms of biological role, NQR complex catalyzes the reduction of ubiquinone-1 to ubiquinol by two successive reactions, coupled with the transport of Na(+) ions from the cytoplasm to the periplasm. NqrA to NqrE are probably involved in the second step, the conversion of ubisemiquinone to ubiquinol. The chain is Na(+)-translocating NADH-quinone reductase subunit C from Vibrio cholerae serotype O1 (strain ATCC 39541 / Classical Ogawa 395 / O395).